Reading from the N-terminus, the 315-residue chain is Fe(3+)-citrate-binding protein YfmC (315 aa).

A signal peptide spans 1–18; it reads MRTYSNKLIAIMSVLLLA. The N-palmitoyl cysteine moiety is linked to residue Cys-19. Cys-19 carries S-diacylglycerol cysteine lipidation. Over residues 27–36 the composition is skewed to low complexity; sequence SSQNNNGSGK. Residues 27–52 are disordered; sequence SSQNNNGSGKSESKDSRVIHDEEGKT. Residues 37–51 are compositionally biased toward basic and acidic residues; the sequence is SESKDSRVIHDEEGK. One can recognise a Fe/B12 periplasmic-binding domain in the interval 60–315; that stretch reads RVVVLELSFL…KDVLKKVYNK (256 aa).

Belongs to the bacterial solute-binding protein 8 family. As to quaternary structure, the complex is composed of one ATP-binding protein (YfmF), two transmembrane proteins (YfmD and YfmE) and a solute-binding protein (YfmC).

The protein localises to the cell membrane. Its function is as follows. Part of the ABC transporter complex YfmCDEF involved in citrate-dependent Fe(3+) import. Binds citrate-dependent Fe(3+) and delivers it to the surface of YfmDE. This chain is Fe(3+)-citrate-binding protein YfmC (yfmC), found in Bacillus subtilis (strain 168).